A 1179-amino-acid polypeptide reads, in one-letter code: Calcium-activated potassium channel subunit alpha-1 (1179 aa).

Residues 1–24 (MANGGGGGGGSSGGGGGGGGGGSG) show a composition bias toward gly residues. A disordered region spans residues 1–62 (MANGGGGGGG…SSSSSSSSSV (62 aa)). Over 1 to 87 (MANGGGGGGG…VPCDSRGQRM (87 aa)) the chain is Extracellular. Residues 41-61 (SSSSSSSSSSSSSSSSSSSSS) show a composition bias toward low complexity. A helical transmembrane segment spans residues 88–108 (WWAFLASSMVTFFGGLFIILL). Residues 109-179 (WRTLKYLWTV…MISAQTLTGR (71 aa)) are Cytoplasmic-facing. 3 S-palmitoyl cysteine lipidation sites follow: cysteine 119, cysteine 120, and cysteine 122. The chain crosses the membrane as a helical span at residues 180–200 (VLVVLVFALSIGALVIYFIDS). The Extracellular segment spans residues 201 to 215 (SNPIESCQNFYKDFT). A helical transmembrane segment spans residues 216-236 (LQIDMAFNVFFLLYFGLRFIA). At 237–240 (ANDK) the chain is on the cytoplasmic side. A helical transmembrane segment spans residues 241-261 (LWFWLEVNSVVDFFTVPPVFV). The Extracellular segment spans residues 262–265 (SVYL). The chain crosses the membrane as a helical; Voltage-sensor span at residues 266–286 (NRSWLGLRFLRALRLIQFSEI). Topologically, residues 287–301 (LQFLNILKTSNSIKL) are cytoplasmic. A helical membrane pass occupies residues 302–322 (VNLLSIFISTWLTAAGFIHLV). Residues 323 to 336 (ENSGDPWENFQNNQ) are Extracellular-facing. An intramembrane region (pore-forming) is located at residues 337–359 (ALTYWECVYLLMVTMSTVGYGDV). The Selectivity for potassium signature appears at 353–356 (TVGY). The Extracellular portion of the chain corresponds to 360–368 (YAKTTLGRL). The helical transmembrane segment at 369 to 389 (FMVFFILGGLAMFASYVPEII) threads the bilayer. At 390–1179 (ELIGNRKKYG…KQKYVQEERL (790 aa)) the chain is on the cytoplasmic side. The RCK N-terminal 1 domain occupies 408 to 550 (RKHIVVCGHI…WNWKEGDDAI (143 aa)). 3 residues coordinate Mg(2+): glutamate 440, glutamine 463, and glutamate 465. The segment S7 stretch occupies residues 557-577 (LGFIAQSCLAQGLSTMLANLF). Positions 614–634 (LSFPTVCELCFVKLKLLMIAI) are segment S8. The heme-binding motif stretch occupies residues 678–682 (CKACH). Positions 702–730 (EQPSTLSPKKKQRNGGMRNSPNSSPKLMR) are disordered. Threonine 706 carries the phosphothreonine modification. 3 positions are modified to phosphoserine: serine 708, serine 721, and serine 725. The segment at 780–800 (VLSGHVVVCIFGDVSSALIGL) is segment S9. One can recognise an RCK N-terminal 2 domain in the interval 782–926 (SGHVVVCIFG…MDRSSPDNSP (145 aa)). Threonine 913 is modified (phosphothreonine). Serine 921 and serine 925 each carry phosphoserine. A Calcium bowl motif is present at residues 946-968 (TELVNDTNVQFLDQDDDDDPDTE). Positions 955, 958, 961, and 963 each coordinate Ca(2+). Residues 975–995 (FACGTAFAVSVLDSLMSATYF) are segment S10. A compositionally biased stretch (low complexity) spans 1129–1154 (RASLSHSSHSSQSSSKKSSSVHSIPS). Residues 1129-1179 (RASLSHSSHSSQSSSKKSSSVHSIPSTANRQNRPKSRESRDKQKYVQEERL) are disordered. Positions 1163–1179 (KSRESRDKQKYVQEERL) are enriched in basic and acidic residues. Phosphoserine occurs at positions 1164 and 1167.

It belongs to the potassium channel family. Calcium-activated (TC 1.A.1.3) subfamily. KCa1.1/KCNMA1 sub-subfamily. As to quaternary structure, homotetramer; which constitutes the calcium-activated potassium channel. Interacts with beta subunits KCNMB1, KCNMB2, KCNMB3 and KCNMB4. Interacts with gamma subunits LRRC26, LRRC38, LRRC52 and LRRC55. Beta and gamma subunits are accessory, and modulate its activity. Interacts with RAB11B. In terms of processing, phosphorylated. Phosphorylation by kinases such as PKA and/or PKG. In smooth muscles, phosphorylation affects its activity. Post-translationally, palmitoylation by ZDHHC22 and ZDHHC23 within the intracellular linker between the S0 and S1 transmembrane domains regulates localization to the plasma membrane. Depalmitoylated by LYPLA1 and LYPLAL1, leading to retard exit from the trans-Golgi network.

The protein localises to the cell membrane. It is found in the endoplasmic reticulum membrane. The catalysed reaction is K(+)(in) = K(+)(out). Ethanol and carbon monoxide-bound heme increase channel activation. Heme inhibits channel activation. In terms of biological role, potassium channel activated by both membrane depolarization or increase in cytosolic Ca(2+) that mediates export of K(+). It is also activated by the concentration of cytosolic Mg(2+). Its activation dampens the excitatory events that elevate the cytosolic Ca(2+) concentration and/or depolarize the cell membrane. It therefore contributes to repolarization of the membrane potential. Plays a key role in controlling excitability in a number of systems, such as regulation of the contraction of smooth muscle, the tuning of hair cells in the cochlea, regulation of transmitter release, and innate immunity. In smooth muscles, its activation by high level of Ca(2+), caused by ryanodine receptors in the sarcoplasmic reticulum, regulates the membrane potential. In cochlea cells, its number and kinetic properties partly determine the characteristic frequency of each hair cell and thereby helps to establish a tonotopic map. Kinetics of KCNMA1 channels are determined by alternative splicing, phosphorylation status and its combination with modulating beta subunits. Highly sensitive to both iberiotoxin (IbTx) and charybdotoxin (CTX). Its function is as follows. Potassium channel activated by both membrane depolarization or increase in cytosolic Ca(2+) that mediates export of K(+). The protein is Calcium-activated potassium channel subunit alpha-1 (KCNMA1) of Oryctolagus cuniculus (Rabbit).